Reading from the N-terminus, the 790-residue chain is GATOR2 complex protein WDR24 (790 aa).

6 WD repeats span residues 72–112 (SLNL…RNKQ), 118–158 (EHKR…SVST), 161–201 (GQSE…RCER), 205–245 (AHNG…AKEM), 249–291 (QTIA…VPAA), and 295–338 (EHRD…VERA). Ser-155 is subject to Phosphoserine; by AMPK. A phosphoserine mark is found at Ser-470 and Ser-496. Phosphothreonine is present on Thr-581. 2 positions are modified to phosphoserine: Ser-594 and Ser-598. A C4-type zinc finger spans residues 718-740 (NCSHCKRPMSSRGWVCDRCHRCA). Positions 719, 722, 733, 736, 743, 746, 757, 760, 762, 765, 768, 779, 783, 785, and 787 each coordinate Zn(2+). Residues 741-790 (SMCAVCHHVVKGLFVWCQGCSHGGHLQHIMKWLEGSSHCPAGCGHLCEYS) form an RING-type; atypical zinc finger.

Belongs to the WD repeat WDR24 family. Component of the GATOR2 subcomplex, composed of MIOS, SEC13, SEH1L, WDR24 and WDR59. The GATOR2 complex interacts with CASTOR1 and CASTOR2; the interaction is negatively regulated by arginine. The GATOR2 complex interacts with SESN1, SESN2 and SESN3; the interaction is negatively regulated by amino acids. SESN1, SESN2 and SESN3 convey leucine availability via direct interaction with SEH1L and WDR24. Post-translationally, phosphorylation at Ser-155 by AMPK in response to glucose deprivation inactivates WDR24 by promoting interaction with 14-3-3 proteins, such as YWHAG, preventing assembly of the GATOR2 complex. Autoubiquitinated; MIOS is required to prevent autoubiquitination.

The protein localises to the lysosome membrane. It carries out the reaction S-ubiquitinyl-[E2 ubiquitin-conjugating enzyme]-L-cysteine + [acceptor protein]-L-lysine = [E2 ubiquitin-conjugating enzyme]-L-cysteine + N(6)-ubiquitinyl-[acceptor protein]-L-lysine.. It functions in the pathway protein modification; protein ubiquitination. The GATOR2 complex is negatively regulated by the upstream amino acid sensors CASTOR1 and SESN2, which sequester the GATOR2 complex in absence of amino acids. In the presence of abundant amino acids, GATOR2 is released from CASTOR1 and SESN2 and activated. Its function is as follows. Catalytic component of the GATOR2 complex, a multiprotein complex that acts as an activator of the amino acid-sensing branch of the mTORC1 signaling pathway. The GATOR2 complex indirectly activates mTORC1 through the inhibition of the GATOR1 subcomplex. GATOR2 probably acts as an E3 ubiquitin-protein ligase toward GATOR1. In the presence of abundant amino acids, the GATOR2 complex mediates ubiquitination of the NPRL2 core component of the GATOR1 complex, leading to GATOR1 inactivation. In the absence of amino acids, GATOR2 is inhibited, activating the GATOR1 complex. In addition to its role in regulation of the mTORC1 complex, promotes the acidification of lysosomes and facilitates autophagic flux. Within the GATOR2 complex, WDR24 constitutes the catalytic subunit that mediates 'Lys-6'-linked ubiquitination of NPRL2. This chain is GATOR2 complex protein WDR24, found in Homo sapiens (Human).